A 513-amino-acid chain; its full sequence is Light-independent protochlorophyllide reductase subunit B (513 aa).

Aspartate 36 is a binding site for [4Fe-4S] cluster. Aspartate 299 functions as the Proton donor in the catalytic mechanism. Substrate is bound at residue 434–435 (GM).

It belongs to the ChlB/BchB/BchZ family. Protochlorophyllide reductase is composed of three subunits; ChlL, ChlN and ChlB. Forms a heterotetramer of two ChlB and two ChlN subunits. It depends on [4Fe-4S] cluster as a cofactor.

Its subcellular location is the plastid. It is found in the chloroplast. The catalysed reaction is chlorophyllide a + oxidized 2[4Fe-4S]-[ferredoxin] + 2 ADP + 2 phosphate = protochlorophyllide a + reduced 2[4Fe-4S]-[ferredoxin] + 2 ATP + 2 H2O. Its pathway is porphyrin-containing compound metabolism; chlorophyll biosynthesis (light-independent). Functionally, component of the dark-operative protochlorophyllide reductase (DPOR) that uses Mg-ATP and reduced ferredoxin to reduce ring D of protochlorophyllide (Pchlide) to form chlorophyllide a (Chlide). This reaction is light-independent. The NB-protein (ChlN-ChlB) is the catalytic component of the complex. The chain is Light-independent protochlorophyllide reductase subunit B from Chaetosphaeridium globosum (Charophycean green alga).